Here is a 447-residue protein sequence, read N- to C-terminus: Phosphoglucosamine mutase (447 aa).

Catalysis depends on S101, which acts as the Phosphoserine intermediate. Positions 101, 242, 244, and 246 each coordinate Mg(2+). The residue at position 101 (S101) is a Phosphoserine.

Belongs to the phosphohexose mutase family. It depends on Mg(2+) as a cofactor. Activated by phosphorylation.

The enzyme catalyses alpha-D-glucosamine 1-phosphate = D-glucosamine 6-phosphate. Catalyzes the conversion of glucosamine-6-phosphate to glucosamine-1-phosphate. This Bradyrhizobium diazoefficiens (strain JCM 10833 / BCRC 13528 / IAM 13628 / NBRC 14792 / USDA 110) protein is Phosphoglucosamine mutase.